The following is a 567-amino-acid chain: Geraniol synthase, chloroplastic (567 aa).

The N-terminal 63 residues, 1-63 (MSCARITVTL…GDNSQRKNTR (63 aa)), are a transit peptide targeting the chloroplast. Residues 48 to 75 (STPLINGDNSQRKNTRQHMEESSSKRRE) are disordered. The segment covering 64-75 (QHMEESSSKRRE) has biased composition (basic and acidic residues). Residues arginine 286, aspartate 323, aspartate 327, arginine 466, and aspartate 469 each contribute to the (2E)-geranyl diphosphate site. 2 residues coordinate Mn(2+): aspartate 323 and aspartate 327. A DDXXD motif motif is present at residues 323-327 (DDIFD). The Mn(2+) site is built by aspartate 469, threonine 473, and glutamate 477.

The protein belongs to the terpene synthase family. Tpsb subfamily. Homodimer. Mn(2+) serves as cofactor. As to expression, expressed in the peltate glandular trichomes of the leaves.

Its subcellular location is the plastid. The protein localises to the chloroplast. It catalyses the reaction (2E)-geranyl diphosphate + H2O = (2E)-geraniol + diphosphate. The protein operates within secondary metabolite biosynthesis; terpenoid biosynthesis. Its function is as follows. Monoterpene synthase that catalyzes the formation of geraniol from geranyl diphosphate. The chain is Geraniol synthase, chloroplastic (GES) from Ocimum basilicum (Sweet basil).